Consider the following 345-residue polypeptide: Dihydroorotase (345 aa).

Zn(2+) contacts are provided by His-14 and His-16. Residues 16 to 18 and Asn-42 contribute to the substrate site; that span reads HLR. 3 residues coordinate Zn(2+): Lys-102, His-139, and His-177. N6-carboxylysine is present on Lys-102. His-139 is a substrate binding site. Substrate is bound at residue Leu-222. A Zn(2+)-binding site is contributed by Asp-250. Asp-250 is an active-site residue. Residues His-254 and Ala-266 each contribute to the substrate site.

Belongs to the metallo-dependent hydrolases superfamily. DHOase family. Class II DHOase subfamily. In terms of assembly, homodimer. Zn(2+) serves as cofactor.

The enzyme catalyses (S)-dihydroorotate + H2O = N-carbamoyl-L-aspartate + H(+). It functions in the pathway pyrimidine metabolism; UMP biosynthesis via de novo pathway; (S)-dihydroorotate from bicarbonate: step 3/3. Functionally, catalyzes the reversible cyclization of carbamoyl aspartate to dihydroorotate. This chain is Dihydroorotase, found in Nitrosomonas eutropha (strain DSM 101675 / C91 / Nm57).